A 502-amino-acid polypeptide reads, in one-letter code: Glycerol kinase (502 aa).

Residue Thr14 coordinates ADP. ATP contacts are provided by Thr14, Thr15, and Ser16. Thr14 contacts sn-glycerol 3-phosphate. Position 18 (Arg18) interacts with ADP. Residues Arg84, Glu85, Tyr136, and Asp246 each coordinate sn-glycerol 3-phosphate. Glycerol is bound by residues Arg84, Glu85, Tyr136, Asp246, and Gln247. Residues Thr268 and Gly311 each contribute to the ADP site. Thr268, Gly311, Gln315, and Gly412 together coordinate ATP. 2 residues coordinate ADP: Gly412 and Asn416.

The protein belongs to the FGGY kinase family. As to quaternary structure, homotetramer and homodimer (in equilibrium). Heterodimer with EIIA-Glc. Binds 1 zinc ion per glycerol kinase EIIA-Glc dimer. The zinc ion is important for dimerization.

It carries out the reaction glycerol + ATP = sn-glycerol 3-phosphate + ADP + H(+). It participates in polyol metabolism; glycerol degradation via glycerol kinase pathway; sn-glycerol 3-phosphate from glycerol: step 1/1. Its activity is regulated as follows. Activity of this regulatory enzyme is affected by several metabolites. Allosterically and non-competitively inhibited by fructose 1,6-bisphosphate (FBP) and unphosphorylated phosphocarrier protein EIIA-Glc (III-Glc), an integral component of the bacterial phosphotransferase (PTS) system. Key enzyme in the regulation of glycerol uptake and metabolism. Catalyzes the phosphorylation of glycerol to yield sn-glycerol 3-phosphate. The polypeptide is Glycerol kinase (Enterobacter sp. (strain 638)).